A 703-amino-acid polypeptide reads, in one-letter code: Arylphorin subunit beta (703 aa).

The N-terminal stretch at 1 to 16 (MKTVIILAGLVALALG) is a signal peptide. 2 N-linked (GlcNAc...) asparagine glycosylation sites follow: Asn-72 and Asn-211.

Belongs to the hemocyanin family. As to quaternary structure, arylphorin is a hexamer of subunits alpha and beta. Fat body.

Its subcellular location is the secreted. The protein localises to the extracellular space. Arylphorin is a larval storage protein (LSP) which may serve as a storage protein used primarily as a source of aromatic amino acids for protein synthesis during metamorphosis. It is a constituent of the sclerotizing system of the cuticle, and serves as a carrier for ecdysteroid hormone. This Manduca sexta (Tobacco hawkmoth) protein is Arylphorin subunit beta.